Consider the following 927-residue polypeptide: BTB/POZ domain-containing protein KCTD19 (927 aa).

A BTB 1 domain is found at 18–72; it reads NVGGWHFSVPRSKLAQFPDSLLWKEASALTSSENQRLFIDRDGSTFRHVHYYLYT. S270 carries the post-translational modification Phosphoserine. A BTB 2 domain is found at 399-486; sequence IKLYVGSHWY…YHIPALSEAL (88 aa). Positions 664–760 are disordered; sequence VEEASLHVPS…NANGTDNPGA (97 aa). Positions 731 to 743 are enriched in basic and acidic residues; it reads DWGKQRPKDRESP.

In terms of assembly, identified in a complex with ZNF541, HDAC1 and HSPA2. Identified in a complex with ZNF541 and HDAC1. Identified in a complex with HDAC1, HDAC2, DNTTIP1 and ZNF541. As to expression, detected in adult testis.

It is found in the nucleus. In terms of biological role, transcription regulator which is essential for male fertility and for the completion of meiotic prophase in spermatocytes. Regulates progression of the pachytene stage of meiotic prophase and promotes the transcriptional activation activity ZNF541. Required for the organization of chromosomes during metaphase I. This Mus musculus (Mouse) protein is BTB/POZ domain-containing protein KCTD19 (Kctd19).